Consider the following 646-residue polypeptide: Zinc finger protein 503 (646 aa).

Polar residues predominate over residues 1-11 (MSTAPSLSALR). The tract at residues 1–70 (MSTAPSLSAL…PPSDPLRQAN (70 aa)) is disordered. Positions 16 to 28 (SGGGGGGGGGGGA) are enriched in gly residues. Residues 34–52 (SALSGNSSGPGPGSSPAGS) show a composition bias toward low complexity. At Ser102 the chain carries Phosphoserine. Residues 121-332 (SQIGKPDPSP…PSAPTSSSVL (212 aa)) are disordered. A compositionally biased stretch (low complexity) spans 130-139 (PSSKLSSVAS). Gly residues-rich tracts occupy residues 140–152 (NGGG…GGAA) and 189–205 (GGGG…GGGV). At Lys209 the chain carries N6-acetyllysine. A compositionally biased stretch (polar residues) spans 217–226 (ATCQPFTPRT). Residues 227–240 (GSPSSSASACSPGG) are compositionally biased toward low complexity. Phosphoserine is present on residues Ser231 and Ser237. Residues 250–259 (EGKDDKKDTD) are compositionally biased toward basic and acidic residues. Gly residues-rich tracts occupy residues 260–277 (VGGG…GGPT) and 300–315 (GGPG…GGSS). The segment covering 316–330 (GSSSGSGPSAPTSSS) has biased composition (low complexity). Residues 514 to 542 (HICNWVSANGPCDKRFATSEELLSHLRTH) form a C2H2-type zinc finger. Arg636 is subject to Omega-N-methylarginine.

The protein belongs to the Elbow/Noc family.

The protein localises to the nucleus. In terms of biological role, may function as a transcriptional repressor. This Homo sapiens (Human) protein is Zinc finger protein 503 (ZNF503).